A 436-amino-acid chain; its full sequence is G2/mitotic-specific cyclin-B (436 aa).

Over residues 1–17 (MSTINNPLNIKTRSHSS) the composition is skewed to polar residues. A disordered region spans residues 1–33 (MSTINNPLNIKTRSHSSMGGGMIMDENKVPKSS).

The protein belongs to the cyclin family. Cyclin AB subfamily. As to quaternary structure, interacts with the cdk1 protein kinase to form a serine/threonine kinase holoenzyme complex also known as maturation promoting factor (MPF). The cyclin subunit imparts substrate specificity to the complex.

Functionally, essential for the control of the cell cycle at the G2/M (mitosis) transition. The chain is G2/mitotic-specific cyclin-B (cycB) from Dictyostelium discoideum (Social amoeba).